Consider the following 164-residue polypeptide: Type II secretion system protein M (164 aa).

The Cytoplasmic segment spans residues 1-17 (MNELRQRWQAMSQRERQ). A helical transmembrane segment spans residues 18 to 38 (LMVVCAAVLLLCVVYYAILQP). The Periplasmic portion of the chain corresponds to 39–164 (WQEREDLWER…RLMLERTDEA (126 aa)).

The protein belongs to the GSP M family. In terms of assembly, type II secretion system is composed of four main components: the outer membrane complex, the inner membrane complex, the cytoplasmic secretion ATPase and the periplasm-spanning pseudopilus. Forms homodimers. Interacts with OutL/GspL. Interacts with OutE/GspE and OutF/GspF.

It localises to the cell inner membrane. Its function is as follows. Inner membrane component of the type II secretion system required for the energy-dependent secretion of extracellular factors such as proteases and toxins from the periplasm. Plays a role in the complex assembly and recruits OutL resulting in a stable complex in the inner membrane. Provides thus a link between the energy-providing OutE protein in the cytoplasm and the rest of the T2SS machinery. This Pectobacterium carotovorum subsp. carotovorum (Erwinia carotovora subsp. carotovora) protein is Type II secretion system protein M (outM).